The following is a 458-amino-acid chain: Homogentisate 1,2-dioxygenase (458 aa).

Catalysis depends on His308, which acts as the Proton acceptor. Fe cation contacts are provided by His351 and Glu357. Positions 366 and 387 each coordinate homogentisate. Residue His387 coordinates Fe cation.

It belongs to the homogentisate dioxygenase family. Hexamer; dimer of trimers. Fe cation serves as cofactor.

It carries out the reaction homogentisate + O2 = 4-maleylacetoacetate + H(+). It participates in amino-acid degradation; L-phenylalanine degradation; acetoacetate and fumarate from L-phenylalanine: step 4/6. Involved in the catabolism of homogentisate (2,5-dihydroxyphenylacetate or 2,5-OH-PhAc), a central intermediate in the degradation of phenylalanine and tyrosine. Catalyzes the oxidative ring cleavage of the aromatic ring of homogentisate to yield maleylacetoacetate. In Xanthomonas axonopodis pv. citri (strain 306), this protein is Homogentisate 1,2-dioxygenase.